A 110-amino-acid polypeptide reads, in one-letter code: Phosphoribosyl-ATP pyrophosphatase (110 aa).

The protein belongs to the PRA-PH family.

The protein localises to the cytoplasm. The catalysed reaction is 1-(5-phospho-beta-D-ribosyl)-ATP + H2O = 1-(5-phospho-beta-D-ribosyl)-5'-AMP + diphosphate + H(+). Its pathway is amino-acid biosynthesis; L-histidine biosynthesis; L-histidine from 5-phospho-alpha-D-ribose 1-diphosphate: step 2/9. The protein is Phosphoribosyl-ATP pyrophosphatase of Teredinibacter turnerae (strain ATCC 39867 / T7901).